Here is a 459-residue protein sequence, read N- to C-terminus: Proton-coupled folate transporter (459 aa).

At M1 the chain carries N-acetylmethionine. The Cytoplasmic portion of the chain corresponds to M1–V25. A Phosphoserine modification is found at S6. The helical transmembrane segment at E26–T44 threads the bilayer. At Q45–T82 the chain is on the extracellular side. N-linked (GlcNAc...) asparagine glycosylation is found at N58 and N68. A disulfide bond links C66 and C298. Residues S83–S108 form a helical membrane-spanning segment. The Cytoplasmic segment spans residues D109 to G112. The chain crosses the membrane as a helical span at residues R113–V135. The Extracellular segment spans residues Q136–H140. A helical transmembrane segment spans residues I141–L154. Topologically, residues G155–R177 are cytoplasmic. D156 and E185 together coordinate H(+). The chain crosses the membrane as a helical span at residues T178 to L203. At R204–Y208 the chain is on the extracellular side. Residues A209–A227 traverse the membrane as a helical segment. The Cytoplasmic portion of the chain corresponds to F228–H266. Residues L267–T289 traverse the membrane as a helical segment. H281 contacts H(+). Over L290–K302 the chain is Extracellular. A helical membrane pass occupies residues L303 to L325. Topologically, residues Q326–D331 are cytoplasmic. A helical membrane pass occupies residues T332–F351. At A352 to T355 the chain is on the extracellular side. A helical membrane pass occupies residues P356–R376. Topologically, residues A377–Q388 are cytoplasmic. The helical transmembrane segment at G389 to Y414 threads the bilayer. The Extracellular segment spans residues P415–K422. A helical transmembrane segment spans residues G423 to G441. The Cytoplasmic portion of the chain corresponds to V442–S459.

The protein belongs to the major facilitator superfamily. SLC46A family. As to quaternary structure, monomer. In terms of tissue distribution, expressed almost exclusively in the small intestine: expressed at high level in the upper half of the small intestine (duodenum and jejunum), expression decreases downwardly in the subsequent quarter and is undetectable in the last quarter (the lowest ileum). Expressed at low level in other tissues, including liver.

It is found in the cell membrane. It localises to the apical cell membrane. Its subcellular location is the basolateral cell membrane. The protein resides in the endosome membrane. The protein localises to the cytoplasm. The catalysed reaction is folate(in) + H(+)(in) = folate(out) + H(+)(out). It carries out the reaction (6S)-5-methyl-5,6,7,8-tetrahydrofolate(in) + H(+)(in) = (6S)-5-methyl-5,6,7,8-tetrahydrofolate(out) + H(+)(out). The enzyme catalyses methotrexate(in) + H(+)(in) = methotrexate(out) + H(+)(out). It catalyses the reaction pemetrexed(in) + H(+)(in) = pemetrexed(out) + H(+)(out). With respect to regulation, in contrast to human ortholog, not inhibited by myricetin. Functionally, proton-coupled folate symporter that mediates folate absorption using an H(+) gradient as a driving force. Involved in the intestinal absorption of folates at the brush-border membrane of the proximal jejunum, and the transport from blood to cerebrospinal fluid across the choroid plexus. Functions at acidic pH via alternate outward- and inward-open conformation states. Protonation of residues in the outward open state primes the protein for transport. Binding of folate promotes breaking of salt bridge network and subsequent closure of the extracellular gate, leading to the inward-open state and release of protons and folate. Also able to transport antifolate drugs, such as methotrexate and pemetrexed. Involved in FOLR1-mediated endocytosis by serving as a route of export of folates from acidified endosomes. Also acts as a lower-affinity, pH-independent heme carrier protein and constitutes the main importer of heme in the intestine. Imports heme in the retina and retinal pigment epithelium, in neurons of the hippocampus, in hepatocytes and in the renal epithelial cells. Hence, participates in the trafficking of heme and increases intracellular iron content. The polypeptide is Proton-coupled folate transporter (Rattus norvegicus (Rat)).